We begin with the raw amino-acid sequence, 449 residues long: Uric acid permease PucJ (449 aa).

The next 13 membrane-spanning stretches (helical) occupy residues 11–31 (LSLQ…LLVG), 41–61 (LSYL…LQTL), 67–87 (GIGL…MIAI), 91–111 (YGIH…FLFA), 119–139 (VLFP…SLVP), 158–178 (EYGS…ILVL), 191–211 (VLIG…VSFS), 229–249 (APAF…VIIV), 277–297 (AEGI…NTFA), 313–333 (IVVT…IAAL), 334–354 (ASAV…GMVI), 372–392 (LLTI…PGIF), and 401–421 (ILVS…NLFF).

It belongs to the nucleobase:cation symporter-2 (NCS2) (TC 2.A.40) family.

The protein localises to the cell membrane. Its function is as follows. Uptake of uric acid. The sequence is that of Uric acid permease PucJ (pucJ) from Bacillus subtilis (strain 168).